We begin with the raw amino-acid sequence, 489 residues long: Betaine aldehyde dehydrogenase (489 aa).

2 residues coordinate K(+): Thr26 and Asp93. Residue 150 to 152 (GAW) participates in NAD(+) binding. Catalysis depends on Lys162, which acts as the Charge relay system. An NAD(+)-binding site is contributed by 176-179 (KPSE). Val180 contributes to the K(+) binding site. 229–232 (GVET) serves as a coordination point for NAD(+). Leu245 is a binding site for K(+). The active-site Proton acceptor is Glu251. NAD(+) is bound by residues Gly253, Cys285, and Glu386. The Nucleophile role is filled by Cys285. Cysteine sulfenic acid (-SOH) is present on Cys285. K(+)-binding residues include Lys456 and Gly459. Glu463 (charge relay system) is an active-site residue.

The protein belongs to the aldehyde dehydrogenase family. In terms of assembly, dimer of dimers. K(+) is required as a cofactor.

The enzyme catalyses betaine aldehyde + NAD(+) + H2O = glycine betaine + NADH + 2 H(+). It participates in amine and polyamine biosynthesis; betaine biosynthesis via choline pathway; betaine from betaine aldehyde: step 1/1. Involved in the biosynthesis of the osmoprotectant glycine betaine. Catalyzes the irreversible oxidation of betaine aldehyde to the corresponding acid. This chain is Betaine aldehyde dehydrogenase, found in Burkholderia pseudomallei (strain 1106a).